We begin with the raw amino-acid sequence, 254 residues long: Type III pantothenate kinase (254 aa).

Asp-7–Lys-14 contributes to the ATP binding site. Substrate-binding positions include Tyr-97 and Gly-104–Arg-107. Asp-106 (proton acceptor) is an active-site residue. Residue Thr-134 coordinates ATP. Residue Thr-184 coordinates substrate.

Belongs to the type III pantothenate kinase family. Homodimer. NH4(+) serves as cofactor. The cofactor is K(+).

It localises to the cytoplasm. It catalyses the reaction (R)-pantothenate + ATP = (R)-4'-phosphopantothenate + ADP + H(+). The protein operates within cofactor biosynthesis; coenzyme A biosynthesis; CoA from (R)-pantothenate: step 1/5. Its function is as follows. Catalyzes the phosphorylation of pantothenate (Pan), the first step in CoA biosynthesis. The chain is Type III pantothenate kinase from Methylibium petroleiphilum (strain ATCC BAA-1232 / LMG 22953 / PM1).